Consider the following 321-residue polypeptide: MLRVLFAGTPEVAVPSLRMLAKDTEHFEVVAVLTRPDAPTGRGRKIMPSPVKMAARELGLDVIECDPADECFLSALKATGAQCAAVVAYGKILRESVLEALPLGWYNLHFSLLPQWRGAAPVQRAIWAGDEVTGCSVFRITAGMDRGPVLGQSTVTIGAHENAGELLDRLAEDGAGLLAASLQALDEGVVNAVDQPAGSYDVAAKITTQDAHMRFDVPAFALDRQIRACTPAPGAWANLHPHGDDANETLHVSKAIPADMTADESPRNLKPGELHVTKHHVWVGTSTDPLELLVVKAAGKREMGAPEWARGAHLAEGAYLD.

111-114 is a (6S)-5,6,7,8-tetrahydrofolate binding site; the sequence is SLLP.

Belongs to the Fmt family.

It catalyses the reaction L-methionyl-tRNA(fMet) + (6R)-10-formyltetrahydrofolate = N-formyl-L-methionyl-tRNA(fMet) + (6S)-5,6,7,8-tetrahydrofolate + H(+). Its function is as follows. Attaches a formyl group to the free amino group of methionyl-tRNA(fMet). The formyl group appears to play a dual role in the initiator identity of N-formylmethionyl-tRNA by promoting its recognition by IF2 and preventing the misappropriation of this tRNA by the elongation apparatus. The sequence is that of Methionyl-tRNA formyltransferase from Bifidobacterium animalis subsp. lactis (strain AD011).